A 221-amino-acid polypeptide reads, in one-letter code: Cysteine-rich venom protein (221 aa).

Gly1 is a signal peptide. In terms of domain architecture, SCP spans 21–148 (DLHNSLRRSV…EYKYFYVCQY (128 aa)). 8 cysteine pairs are disulfide-bonded: Cys57-Cys135, Cys74-Cys149, Cys130-Cys146, Cys168-Cys175, Cys171-Cys180, Cys184-Cys216, Cys193-Cys210, and Cys201-Cys214. Residues 184–216 (CTHEDKFTNCKDLVKQGCNNNYLKTNCPASCSC) enclose the ShKT domain.

It belongs to the CRISP family. Expressed by the venom gland.

Its subcellular location is the secreted. Blocks contraction of smooth muscle elicited by high potassium-induced depolarization, but does not block caffeine-stimulated contraction. May target voltage-gated calcium channels in smooth muscle. This Vipera nikolskii (Nikolsky's adder) protein is Cysteine-rich venom protein.